The chain runs to 303 residues: Probable endonuclease 4 (303 aa).

Zn(2+) contacts are provided by histidine 78, histidine 118, glutamate 154, aspartate 188, histidine 191, histidine 222, aspartate 235, histidine 237, and glutamate 267.

This sequence belongs to the AP endonuclease 2 family. Zn(2+) serves as cofactor.

The catalysed reaction is Endonucleolytic cleavage to 5'-phosphooligonucleotide end-products.. Functionally, endonuclease IV plays a role in DNA repair. It cleaves phosphodiester bonds at apurinic or apyrimidinic (AP) sites, generating a 3'-hydroxyl group and a 5'-terminal sugar phosphate. The protein is Probable endonuclease 4 of Mycoplasmoides gallisepticum (strain R(low / passage 15 / clone 2)) (Mycoplasma gallisepticum).